Reading from the N-terminus, the 462-residue chain is Bifunctional protein GlmU (462 aa).

The pyrophosphorylase stretch occupies residues 1-235; it reads MSYINFSAII…TFEIMGVNSK (235 aa). UDP-N-acetyl-alpha-D-glucosamine contacts are provided by residues 11–14, K25, Q80, 85–86, 107–109, G144, E159, and N233; these read LAAG, GT, and YGD. Position 109 (D109) interacts with Mg(2+). N233 provides a ligand contact to Mg(2+). A linker region spans residues 236–256; that stretch reads SDFVDLDKQYQQRKVQCLLSS. The tract at residues 257-462 is N-acetyltransferase; sequence GLMIIDPNRF…LNWKRLKNKK (206 aa). 2 residues coordinate UDP-N-acetyl-alpha-D-glucosamine: R339 and K357. H369 serves as the catalytic Proton acceptor. Residues Y372 and N383 each coordinate UDP-N-acetyl-alpha-D-glucosamine. Residues A386, 392 to 393, A429, and R446 contribute to the acetyl-CoA site; that span reads NY.

This sequence in the N-terminal section; belongs to the N-acetylglucosamine-1-phosphate uridyltransferase family. The protein in the C-terminal section; belongs to the transferase hexapeptide repeat family. In terms of assembly, homotrimer. Mg(2+) serves as cofactor.

Its subcellular location is the cytoplasm. The enzyme catalyses alpha-D-glucosamine 1-phosphate + acetyl-CoA = N-acetyl-alpha-D-glucosamine 1-phosphate + CoA + H(+). It carries out the reaction N-acetyl-alpha-D-glucosamine 1-phosphate + UTP + H(+) = UDP-N-acetyl-alpha-D-glucosamine + diphosphate. The protein operates within nucleotide-sugar biosynthesis; UDP-N-acetyl-alpha-D-glucosamine biosynthesis; N-acetyl-alpha-D-glucosamine 1-phosphate from alpha-D-glucosamine 6-phosphate (route II): step 2/2. Its pathway is nucleotide-sugar biosynthesis; UDP-N-acetyl-alpha-D-glucosamine biosynthesis; UDP-N-acetyl-alpha-D-glucosamine from N-acetyl-alpha-D-glucosamine 1-phosphate: step 1/1. It participates in bacterial outer membrane biogenesis; LPS lipid A biosynthesis. Functionally, catalyzes the last two sequential reactions in the de novo biosynthetic pathway for UDP-N-acetylglucosamine (UDP-GlcNAc). The C-terminal domain catalyzes the transfer of acetyl group from acetyl coenzyme A to glucosamine-1-phosphate (GlcN-1-P) to produce N-acetylglucosamine-1-phosphate (GlcNAc-1-P), which is converted into UDP-GlcNAc by the transfer of uridine 5-monophosphate (from uridine 5-triphosphate), a reaction catalyzed by the N-terminal domain. The chain is Bifunctional protein GlmU from Blochmanniella pennsylvanica (strain BPEN).